We begin with the raw amino-acid sequence, 43 residues long: Delta/kappa-actitoxin-Avd4a (43 aa).

3 cysteine pairs are disulfide-bonded: Cys-4–Cys-39, Cys-6–Cys-32, and Cys-22–Cys-40.

The protein belongs to the sea anemone type 3 (BDS) potassium channel toxin family.

The protein localises to the secreted. The protein resides in the nematocyst. Acts as a gating modifier on both Kv and Nav ion channels, and also acts on blood pressure. Voltage-dependently inhibits voltage-gated potassium channels Kv3 (Kv3.1/KCNC1, Kv3.2/KCNC2 and Kv3.4/KCNC4) and slows inactivation of the voltage-gated sodium channel Nav1.7/SCN9A. Inhibits all Kv3.1, Kv3.2 and Kv3.4 by about 50% when tested at a voltage of +40 mV (45%, 48% and 56%, respectively). May act by binding residues in voltage-sensing domains S3b and S4 of Kv3. On sodium channel, tests have been done on human Nav1.7/SCN9A (expressed in HEK293 cells) (EC(50)=3 nM) and rat SCG neurons that mostly carry Nav1.7 channels (EC(50)=300 nM). This toxin also reduces blood pressure. The chain is Delta/kappa-actitoxin-Avd4a from Anemonia sulcata (Mediterranean snakelocks sea anemone).